The following is a 1161-amino-acid chain: Cell wall protein DAN4 (1161 aa).

The signal sequence occupies residues 1 to 19 (MVNISIVAGIVALATSAAA). 4 disordered regions span residues 123-309 (TSTS…SASS), 326-345 (TPAT…STTN), 354-547 (TTTS…SSFG), and 691-713 (STDS…SSTA). The interval 134 to 286 (TSTTPTTTIT…TTSTTSTTST (153 aa)) is 46 X 3 AA tandem repeats of T-[SP]-T. The span at 354–372 (TTTSDTYISSSSPSQVTSS) shows a compositional bias: low complexity. A run of 14 repeats spans residues 373–384 (AEPTTVSEVTSS), 385–396 (VEPTRSSQVTSS), 397–408 (AEPTTVSEFTSS), 409–420 (VEPTRSSQVTSS), 421–432 (AEPTTVSEFTSS), 433–444 (VEPTRSSQVTSS), 445–456 (AEPTTVSEFTSS), 457–468 (VEPTRSSQVTSS), 469–480 (AEPTTVSEFTSS), 481–492 (VEPTRSSQVTSS), 493–504 (AEPTTVSEFTSS), 505–516 (VEPIRSSQVTSS), 517–528 (AEPTTVSEVTSS), and 529–540 (VEPIRSSQVTTT). The interval 373 to 540 (AEPTTVSEVT…PIRSSQVTTT (168 aa)) is 14 X 12 AA approximate tandem repeats. Residues 373 to 547 (AEPTTVSEVT…TTTEPVSSFG (175 aa)) show a composition bias toward polar residues. A run of 2 repeats spans residues 826-913 (EDSV…EDNE) and 914-1001 (EDIT…EDNE). A 2.5 X 88 AA approximate tandem repeats region spans residues 826 to 1040 (EDSVLTKTQV…SPVSSFNSKA (215 aa)). Residues 1002-1040 (EDVASTKTELLTMETTITSCSGGICTTLMSPVSSFNSKA) form a 2-3; truncated repeat. N1137 carries the GPI-anchor amidated asparagine lipid modification. The propeptide at 1138 to 1161 (GAYNFDKDNIFGTAIVAVVALLLL) is removed in mature form.

Belongs to the SRP1/TIP1 family. Extensively O-glycosylated. Post-translationally, the GPI-anchor is attached to the protein in the endoplasmic reticulum and serves to target the protein to the cell surface. There, the glucosamine-inositol phospholipid moiety is cleaved off and the GPI-modified mannoprotein is covalently attached via its lipidless GPI glycan remnant to the 1,6-beta-glucan of the outer cell wall layer.

It localises to the secreted. It is found in the cell wall. The protein localises to the cell membrane. Component of the cell wall. This Saccharomyces cerevisiae (strain ATCC 204508 / S288c) (Baker's yeast) protein is Cell wall protein DAN4.